Here is a 254-residue protein sequence, read N- to C-terminus: Triosephosphate isomerase (254 aa).

10 to 12 provides a ligand contact to substrate; sequence NWK. Histidine 96 (electrophile) is an active-site residue. Glutamate 168 (proton acceptor) is an active-site residue. Residues glycine 174, serine 214, and 235 to 236 contribute to the substrate site; that span reads GG.

The protein belongs to the triosephosphate isomerase family. In terms of assembly, homodimer.

Its subcellular location is the cytoplasm. The catalysed reaction is D-glyceraldehyde 3-phosphate = dihydroxyacetone phosphate. It functions in the pathway carbohydrate biosynthesis; gluconeogenesis. It participates in carbohydrate degradation; glycolysis; D-glyceraldehyde 3-phosphate from glycerone phosphate: step 1/1. Functionally, involved in the gluconeogenesis. Catalyzes stereospecifically the conversion of dihydroxyacetone phosphate (DHAP) to D-glyceraldehyde-3-phosphate (G3P). The sequence is that of Triosephosphate isomerase from Rhodopirellula baltica (strain DSM 10527 / NCIMB 13988 / SH1).